The following is a 354-amino-acid chain: Tetraacyldisaccharide 4'-kinase (354 aa).

53-60 (AWGGTGKT) serves as a coordination point for ATP.

Belongs to the LpxK family.

The enzyme catalyses a lipid A disaccharide + ATP = a lipid IVA + ADP + H(+). It participates in glycolipid biosynthesis; lipid IV(A) biosynthesis; lipid IV(A) from (3R)-3-hydroxytetradecanoyl-[acyl-carrier-protein] and UDP-N-acetyl-alpha-D-glucosamine: step 6/6. Functionally, transfers the gamma-phosphate of ATP to the 4'-position of a tetraacyldisaccharide 1-phosphate intermediate (termed DS-1-P) to form tetraacyldisaccharide 1,4'-bis-phosphate (lipid IVA). This is Tetraacyldisaccharide 4'-kinase from Nitratidesulfovibrio vulgaris (strain ATCC 29579 / DSM 644 / CCUG 34227 / NCIMB 8303 / VKM B-1760 / Hildenborough) (Desulfovibrio vulgaris).